A 1024-amino-acid polypeptide reads, in one-letter code: Nardilysin-like (1024 aa).

Residues 41-103 (PDIYPEGSVP…DEVKGKGDHQ (63 aa)) form a disordered region. The segment covering 52 to 95 (QIDEDDEDGEEEDSDGSSEDDDDDEDDEEDGEGDEEDEDEDEDE) has biased composition (acidic residues). Residue His129 coordinates Zn(2+). Catalysis depends on Glu132, which acts as the Proton acceptor. His133 contacts Zn(2+). Glu203 is a catalytic residue. Glu210 provides a ligand contact to Zn(2+).

It belongs to the peptidase M16 family. Zn(2+) serves as cofactor.

The enzyme catalyses Hydrolysis of polypeptides, preferably at -Xaa-|-Arg-Lys-, and less commonly at -Arg-|-Arg-Xaa-, in which Xaa is not Arg or Lys.. In terms of biological role, cleaves peptide substrates on the N-terminus of arginine residues in dibasic pairs. This is Nardilysin-like from Arabidopsis thaliana (Mouse-ear cress).